A 1099-amino-acid chain; its full sequence is SLIT-ROBO Rho GTPase-activating protein 3 (1099 aa).

The F-BAR domain occupies alanine 19–aspartate 314. Residues glutamine 352–threonine 392 are a coiled coil. The disordered stretch occupies residues glycine 470 to proline 493. The region spanning glycine 506–phenylalanine 694 is the Rho-GAP domain. The region spanning valine 744–methionine 803 is the SH3 domain. A compositionally biased stretch (polar residues) spans aspartate 809–serine 820. The segment at aspartate 809–glycine 846 is disordered. A phosphoserine mark is found at serine 817, serine 820, serine 821, serine 837, and serine 858. Positions alanine 861–lysine 911 are disordered. Positions histidine 952–alanine 987 form a coiled coil. Serine 954 is subject to Phosphoserine. Disordered regions lie at residues threonine 994–histidine 1014 and alanine 1045–methionine 1099. The span at valine 1060–serine 1074 shows a compositional bias: low complexity. Residues proline 1089 to methionine 1099 show a composition bias toward polar residues.

In terms of assembly, homodimer. Forms a heterooligomer with SRGAP1 and SRGAP2 through its F-BAR domain. Interacts with WASF1. Probably interacts with ROBO1. Interacts with FASLG.

In terms of biological role, GTPase-activating protein for RAC1 and perhaps CDC42, but not for RhoA small GTPase. May attenuate RAC1 signaling in neurons. This chain is SLIT-ROBO Rho GTPase-activating protein 3 (Srgap3), found in Mus musculus (Mouse).